Here is a 625-residue protein sequence, read N- to C-terminus: Serine/threonine-protein kinase PknB (625 aa).

Residues Met-1–Trp-331 are Cytoplasmic-facing. The Protein kinase domain occupies Tyr-11–Ile-274. ATP contacts are provided by residues Leu-17–Val-25, Lys-40, and Glu-93–Val-95. Asp-138 acts as the Proton acceptor in catalysis. Residues Lys-140–Asn-143 and Asp-156 each bind ATP. Residues Asn-143 and Asp-156 each coordinate Mg(2+). Residue Ser-169 is modified to Phosphoserine; by autocatalysis. Residues Thr-171, Thr-173, and Thr-294 each carry the phosphothreonine; by autocatalysis modification. Ser-295 is subject to Phosphoserine; by autocatalysis. The disordered stretch occupies residues Ala-302–Ser-321. Thr-309 is modified (phosphothreonine; by autocatalysis). A helical membrane pass occupies residues Leu-332–Val-352. At Gly-353–Ala-625 the chain is on the extracellular side. PASTA domains follow at residues Asn-355–Thr-421, Gly-422–Ala-489, Gly-490–Lys-556, and Gly-557–Ala-625. Positions Asp-591–Pro-612 are disordered. A compositionally biased stretch (polar residues) spans Gln-597–Thr-611.

Belongs to the protein kinase superfamily. Ser/Thr protein kinase family. As to quaternary structure, homodimer. In terms of processing, autophosphorylated. Dephosphorylated by PstP.

The protein resides in the cell membrane. It catalyses the reaction L-seryl-[protein] + ATP = O-phospho-L-seryl-[protein] + ADP + H(+). The catalysed reaction is L-threonyl-[protein] + ATP = O-phospho-L-threonyl-[protein] + ADP + H(+). With respect to regulation, by K-252a. Protein kinase that regulates many aspects of mycobacterial physiology. Is a key component of a signal transduction pathway that regulates cell growth, cell shape and cell division via phosphorylation of target proteins. Probably phosphorylates RseA. In Mycolicibacterium smegmatis (strain ATCC 700084 / mc(2)155) (Mycobacterium smegmatis), this protein is Serine/threonine-protein kinase PknB (pknB).